The sequence spans 560 residues: ATP synthase subunit beta, mitochondrial (560 aa).

A mitochondrion-targeting transit peptide spans 1-54 (MASRRLLASLLRQSAQRGGGLISRSLGNSIPKSASRASSRASPKGFLLNRAVQY). 2 disordered regions span residues 20-44 (GLISRSLGNSIPKSASRASSRASPK) and 58-81 (AAAPASQPSTPPKSGSEPSGKITD). Low complexity-rich tracts occupy residues 33–42 (SASRASSRAS) and 58–71 (AAAPASQPSTPPKS). Position 235-242 (235-242 (GGAGVGKT)) interacts with ATP.

The protein belongs to the ATPase alpha/beta chains family. In terms of assembly, F-type ATPases have 2 components, CF(1) - the catalytic core - and CF(0) - the membrane proton channel. CF(1) has five subunits: alpha(3), beta(3), gamma(1), delta(1), epsilon(1). CF(0) has three main subunits: a, b and c.

It is found in the mitochondrion. The protein resides in the mitochondrion inner membrane. It carries out the reaction ATP + H2O + 4 H(+)(in) = ADP + phosphate + 5 H(+)(out). In terms of biological role, mitochondrial membrane ATP synthase (F(1)F(0) ATP synthase or Complex V) produces ATP from ADP in the presence of a proton gradient across the membrane which is generated by electron transport complexes of the respiratory chain. F-type ATPases consist of two structural domains, F(1) - containing the extramembraneous catalytic core, and F(0) - containing the membrane proton channel, linked together by a central stalk and a peripheral stalk. During catalysis, ATP synthesis in the catalytic domain of F(1) is coupled via a rotary mechanism of the central stalk subunits to proton translocation. Subunits alpha and beta form the catalytic core in F(1). Rotation of the central stalk against the surrounding alpha(3)beta(3) subunits leads to hydrolysis of ATP in three separate catalytic sites on the beta subunits. This chain is ATP synthase subunit beta, mitochondrial (ATPB), found in Nicotiana plumbaginifolia (Leadwort-leaved tobacco).